A 713-amino-acid polypeptide reads, in one-letter code: Acetyl-coenzyme A synthetase 1 (713 aa).

A disordered region spans residues 1-39; that stretch reads MSPSAVQSSKLEEQSSEIDKLKAKMSQSAATAQQKKEHE. A compositionally biased stretch (basic and acidic residues) spans 10–22; that stretch reads KLEEQSSEIDKLK. Residues 248–251 and Thr-367 each bind CoA; that span reads RGGK. Residues 443–445, 467–472, Asp-559, and Arg-574 contribute to the ATP site; these read GEP and DTYWQT. Residues 552–600 carry the FACS motif; the sequence is PGYYFTGDGAAKDKDGYIWILGRVDDVVNVSGHRLSTAEIEAAIIEDPI. Residue Ser-582 coordinates CoA. ATP is bound at residue Arg-585. CoA is bound at residue Arg-650. The Microbody targeting signal signature appears at 711–713; the sequence is VKL.

This sequence belongs to the ATP-dependent AMP-binding enzyme family.

The protein resides in the microsome. Its subcellular location is the cytoplasm. It is found in the mitochondrion. It localises to the nucleus. The enzyme catalyses acetate + ATP + CoA = acetyl-CoA + AMP + diphosphate. Catalyzes the production of acetyl-CoA. Provides the acetyl-CoA source for histone acetylation in the nucleus. 'Aerobic' isozyme of acetyl-coenzyme A synthetase, which supports growth on nonfermentable carbon sources such as glycerol and ethanol. May be required for assimilation of ethanol and acetate. The sequence is that of Acetyl-coenzyme A synthetase 1 (ACS1) from Saccharomyces cerevisiae (strain ATCC 204508 / S288c) (Baker's yeast).